The chain runs to 125 residues: uncharacterized protein (125 aa).

The segment at 50 to 73 is disordered; sequence QTSDFSDESSRSDSSSVTNENEVS.

This is an uncharacterized protein from Microplitis demolitor (Parasitoid wasp).